The sequence spans 297 residues: 33 kDa chaperonin (297 aa).

2 disulfides stabilise this stretch: C234–C236 and C267–C270.

It belongs to the HSP33 family. Under oxidizing conditions two disulfide bonds are formed involving the reactive cysteines. Under reducing conditions zinc is bound to the reactive cysteines and the protein is inactive.

The protein resides in the cytoplasm. Redox regulated molecular chaperone. Protects both thermally unfolding and oxidatively damaged proteins from irreversible aggregation. Plays an important role in the bacterial defense system toward oxidative stress. This chain is 33 kDa chaperonin, found in Pseudoalteromonas atlantica (strain T6c / ATCC BAA-1087).